Reading from the N-terminus, the 439-residue chain is Kelch domain-containing protein 10 (439 aa).

The segment at 1 to 50 (MSAAQGWDRNRRRGGGAAGGASGVSGAGAAGGGRGTGQLNRFVQLSGRPH) is disordered. R13 carries the post-translational modification Omega-N-methylarginine. A compositionally biased stretch (gly residues) spans 15–36 (GGAAGGASGVSGAGAAGGGRGT). Kelch repeat units lie at residues 87–154 (PARS…LASM), 155–198 (SLVL…SCRG), 199–260 (KRPS…RYRH), 261–319 (EIAH…HSCV), 320–364 (QIKN…VYFH), and 365–403 (CAAV…PSLL). The interval 398–439 (VVPSLLELAWEKLLAAFPNLANLSRTQLLHLGLTQELIERLK) is interaction with CUL2.

Belongs to the KLHDC10 family. In terms of assembly, component of a CRL2 E3 ubiquitin-protein ligase complex, also named ECS (Elongin BC-CUL2/5-SOCS-box protein) complex, composed of CUL2, Elongin BC (ELOB and ELOC), RBX1 and substrate-specific adapter KLHDC10. Interacts (via the 6 Kelch repeats) with PPP5C.

The protein localises to the nucleus. The protein resides in the cytoplasm. The protein operates within protein modification; protein ubiquitination. In terms of biological role, substrate-recognition component of a Cul2-RING (CRL2) E3 ubiquitin-protein ligase complex of the DesCEND (destruction via C-end degrons) pathway, which recognizes a C-degron located at the extreme C-terminus of target proteins, leading to their ubiquitination and degradation. The C-degron recognized by the DesCEND pathway is usually a motif of less than ten residues and can be present in full-length proteins, truncated proteins or proteolytically cleaved forms. The CRL2(KLHDC10) complex specifically recognizes proteins with a proline-glycine (Pro-Gly) or an alanine tail (CAT tail) at the C-terminus, leading to their ubiquitination and degradation. The CRL2(KLHDC10) complex is involved in the ribosome-associated quality control (RQC) pathway, which mediates the extraction of incompletely synthesized nascent chains from stalled ribosomes: CRL2(KLHDC10) acts downstream of NEMF and recognizes CAT tails associated with stalled nascent chains, leading to their ubiquitination and degradation. Participates in the oxidative stress-induced cell death through MAP3K5 activation. Inhibits PPP5C phosphatase activity on MAP3K5. Acts as a regulator of necroptosis. The polypeptide is Kelch domain-containing protein 10 (Mus musculus (Mouse)).